Here is a 701-residue protein sequence, read N- to C-terminus: Elongation factor G (701 aa).

Residues 6–285 enclose the tr-type G domain; sequence HKVRNIGIMA…AVVAYLPNPL (280 aa). GTP-binding positions include 15–22, 79–83, and 133–136; these read AHIDAGKT, DNPGH, and NKMD.

The protein belongs to the TRAFAC class translation factor GTPase superfamily. Classic translation factor GTPase family. EF-G/EF-2 subfamily.

Its subcellular location is the cytoplasm. Catalyzes the GTP-dependent ribosomal translocation step during translation elongation. During this step, the ribosome changes from the pre-translocational (PRE) to the post-translocational (POST) state as the newly formed A-site-bound peptidyl-tRNA and P-site-bound deacylated tRNA move to the P and E sites, respectively. Catalyzes the coordinated movement of the two tRNA molecules, the mRNA and conformational changes in the ribosome. In Micrococcus luteus (Micrococcus lysodeikticus), this protein is Elongation factor G (fusA).